Reading from the N-terminus, the 500-residue chain is Hexose transporter 1 (500 aa).

Topologically, residues methionine 1 to serine 25 are cytoplasmic. Residues leucine 26 to leucine 46 form a helical membrane-spanning segment. Residues asparagine 47–serine 75 lie on the Extracellular side of the membrane. A disulfide bridge links cysteine 60 with cysteine 67. The helical transmembrane segment at phenylalanine 76 to valine 96 threads the bilayer. Residues glutamine 97–arginine 101 lie on the Cytoplasmic side of the membrane. Residues phenylalanine 102–histidine 122 form a helical membrane-spanning segment. Topologically, residues histidine 123–arginine 131 are extracellular. Residues leucine 132 to methionine 152 form a helical membrane-spanning segment. The Cytoplasmic segment spans residues threonine 153–glutamine 166. Glutamine 166 serves as a coordination point for alpha-D-glucose. Residue glutamine 166 coordinates beta-D-glucose. Residues leucine 167–proline 187 traverse the membrane as a helical segment. At glutamate 188–arginine 203 the chain is on the extracellular side. A helical transmembrane segment spans residues leucine 204–phenylalanine 224. Topologically, residues lysine 225 to tyrosine 289 are cytoplasmic. The helical transmembrane segment at valine 290–valine 310 threads the bilayer. Alpha-D-glucose is bound by residues glutamine 301, glutamine 302, and asparagine 307. Glutamine 301 lines the beta-D-glucose pocket. Asparagine 307 provides a ligand contact to beta-D-glucose. Over serine 311 to threonine 327 the chain is Extracellular. Residues threonine 328–valine 348 form a helical membrane-spanning segment. Asparagine 337 is a beta-D-glucose binding site. Topologically, residues glutamate 349–leucine 356 are cytoplasmic. A helical membrane pass occupies residues leucine 357–isoleucine 377. Residues asparagine 378–serine 390 lie on the Extracellular side of the membrane. The chain crosses the membrane as a helical span at residues alanine 391–leucine 411. Tryptophan 408 is an alpha-D-glucose binding site. At histidine 412–serine 425 the chain is on the cytoplasmic side. The helical transmembrane segment at leucine 426 to isoleucine 446 threads the bilayer. The Extracellular portion of the chain corresponds to lysine 447–threonine 451. The chain crosses the membrane as a helical span at residues isoleucine 452–isoleucine 472. The Cytoplasmic portion of the chain corresponds to lysine 473–valine 500.

This sequence belongs to the major facilitator superfamily. Sugar transporter (TC 2.A.1.1) family. Homodimer.

The protein resides in the cell membrane. The enzyme catalyses D-glucose(out) = D-glucose(in). It carries out the reaction D-fructose(out) = D-fructose(in). The catalysed reaction is D-galactose(in) = D-galactose(out). It catalyses the reaction D-mannose(out) = D-mannose(in). The enzyme catalyses D-glucosamine(out) = D-glucosamine(in). It carries out the reaction D-xylose(out) = D-xylose(in). Its activity is regulated as follows. Inhibited by cytochalasin B. Sodium-independent facilitative hexose transporter. Can transport D-glucose and D-fructose. Can transport D-mannose, D-galactose, D-xylose and D-glucosamine. The protein is Hexose transporter 1 of Plasmodium knowlesi.